Here is a 163-residue protein sequence, read N- to C-terminus: ATP synthase subunit b 1 (163 aa).

The chain crosses the membrane as a helical span at residues 7-27; the sequence is PETWVAIAFVILMGLFAYLGV.

The protein belongs to the ATPase B chain family. In terms of assembly, F-type ATPases have 2 components, F(1) - the catalytic core - and F(0) - the membrane proton channel. F(1) has five subunits: alpha(3), beta(3), gamma(1), delta(1), epsilon(1). F(0) has three main subunits: a(1), b(2) and c(10-14). The alpha and beta chains form an alternating ring which encloses part of the gamma chain. F(1) is attached to F(0) by a central stalk formed by the gamma and epsilon chains, while a peripheral stalk is formed by the delta and b chains.

The protein localises to the cell inner membrane. F(1)F(0) ATP synthase produces ATP from ADP in the presence of a proton or sodium gradient. F-type ATPases consist of two structural domains, F(1) containing the extramembraneous catalytic core and F(0) containing the membrane proton channel, linked together by a central stalk and a peripheral stalk. During catalysis, ATP synthesis in the catalytic domain of F(1) is coupled via a rotary mechanism of the central stalk subunits to proton translocation. In terms of biological role, component of the F(0) channel, it forms part of the peripheral stalk, linking F(1) to F(0). The sequence is that of ATP synthase subunit b 1 from Bradyrhizobium sp. (strain BTAi1 / ATCC BAA-1182).